We begin with the raw amino-acid sequence, 44 residues long: Thrombin-like enzyme F202 (44 aa).

The 44-residue stretch at 1–44 folds into the Peptidase S1 domain; it reads VVGGDECNINEHRFLVALYANSSLLCGGTLINQEWVLIAAHCDR. A disulfide bond links C26 and C42. The active-site Charge relay system is H41.

This sequence belongs to the peptidase S1 family. Snake venom subfamily. As to quaternary structure, monomer. Post-translationally, contains 6 disulfide bonds. As to expression, expressed by the venom gland.

Its subcellular location is the secreted. Its activity is regulated as follows. Enzyme activity is markedly inhibited by TLCK and PMSF, and moderately by SBTi. Platelet aggregating activity is strongly inhibited by TLCK. Thrombin-like snake venom serine protease that coagulates fibrinogen by inducing a fast degradation of the alpha chain (FGA) from human citrated plasma, and a slow degradation of beta chain (FGB). Potently induces platelet aggregation in both platelet rich plasma and washed platelet preparations in a concentration-dependent fashion. Shows amidolytic activities. This is Thrombin-like enzyme F202 from Crotalus durissus cascavella (Northeastern Brazilian rattlesnake).